We begin with the raw amino-acid sequence, 906 residues long: Protein translocase subunit SecA (906 aa).

ATP contacts are provided by residues Gln86, 104-108 (GEGKT), and Asp511. Basic and acidic residues-rich tracts occupy residues 853–865 (HESVIDNNQRHDE) and 877–888 (VRREGPKVKRND). The interval 853–906 (HESVIDNNQRHDEDEQEEAPKVQQVRREGPKVKRNDPCPCGSGKKYKQCHGKVE) is disordered. The Zn(2+) site is built by Cys890, Cys892, Cys901, and His902. Residues 896-906 (KKYKQCHGKVE) are compositionally biased toward basic residues.

The protein belongs to the SecA family. In terms of assembly, monomer and homodimer. Part of the essential Sec protein translocation apparatus which comprises SecA, SecYEG and auxiliary proteins SecDF-YajC and YidC. Requires Zn(2+) as cofactor.

The protein resides in the cell inner membrane. It is found in the cytoplasm. The catalysed reaction is ATP + H2O + cellular proteinSide 1 = ADP + phosphate + cellular proteinSide 2.. In terms of biological role, part of the Sec protein translocase complex. Interacts with the SecYEG preprotein conducting channel. Has a central role in coupling the hydrolysis of ATP to the transfer of proteins into and across the cell membrane, serving both as a receptor for the preprotein-SecB complex and as an ATP-driven molecular motor driving the stepwise translocation of polypeptide chains across the membrane. The protein is Protein translocase subunit SecA of Francisella tularensis subsp. holarctica (strain OSU18).